We begin with the raw amino-acid sequence, 674 residues long: Probable potassium transport system protein Kup (674 aa).

12 helical membrane-spanning segments follow: residues Ile7–Leu27, Leu52–Leu72, Trp95–Pro115, Leu145–Ile165, Phe169–Ile189, Leu204–Leu224, Ile244–Ala264, Val291–Ile311, Ile342–Phe362, Met368–Ser388, Val397–Ser417, and Gly425–Phe445.

The protein belongs to the HAK/KUP transporter (TC 2.A.72) family.

The protein localises to the cell membrane. It catalyses the reaction K(+)(in) + H(+)(in) = K(+)(out) + H(+)(out). Transport of potassium into the cell. Likely operates as a K(+):H(+) symporter. This is Probable potassium transport system protein Kup from Ligilactobacillus salivarius (strain UCC118) (Lactobacillus salivarius).